Consider the following 138-residue polypeptide: uncharacterized protein (138 aa).

This is an uncharacterized protein from Archaeoglobus fulgidus (strain ATCC 49558 / DSM 4304 / JCM 9628 / NBRC 100126 / VC-16).